We begin with the raw amino-acid sequence, 433 residues long: 28S rRNA (cytosine-C(5))-methyltransferase (433 aa).

S-adenosyl-L-methionine-binding positions include 235-241 (CAAPGMK), glutamate 259, aspartate 286, and aspartate 304. Catalysis depends on cysteine 357, which acts as the Nucleophile.

This sequence belongs to the class I-like SAM-binding methyltransferase superfamily. RsmB/NOP family.

It catalyses the reaction a cytidine in 28S rRNA + S-adenosyl-L-methionine = a 5-methylcytidine in 28S rRNA + S-adenosyl-L-homocysteine + H(+). Its function is as follows. S-adenosyl-L-methionine-dependent methyltransferase that specifically methylates the C(5) position of a cytosine in 28S rRNA. This is 28S rRNA (cytosine-C(5))-methyltransferase from Drosophila melanogaster (Fruit fly).